The sequence spans 242 residues: Uridylate kinase (242 aa).

An ATP-binding site is contributed by 11–14 (KLSG). The tract at residues 19 to 24 (GNMGYG) is involved in allosteric activation by GTP. Gly53 lines the UMP pocket. The ATP site is built by Gly54 and Arg58. Residues Asp73 and 134–141 (SGNPFFTT) each bind UMP. 3 residues coordinate ATP: Thr161, Tyr167, and Asp170.

It belongs to the UMP kinase family. In terms of assembly, homohexamer.

The protein resides in the cytoplasm. It carries out the reaction UMP + ATP = UDP + ADP. Its pathway is pyrimidine metabolism; CTP biosynthesis via de novo pathway; UDP from UMP (UMPK route): step 1/1. Allosterically activated by GTP. Inhibited by UTP. In terms of biological role, catalyzes the reversible phosphorylation of UMP to UDP. The polypeptide is Uridylate kinase (Nostoc sp. (strain PCC 7120 / SAG 25.82 / UTEX 2576)).